Here is a 128-residue protein sequence, read N- to C-terminus: MFS18 protein (128 aa).

The signal sequence occupies residues 1 to 25 (MARSSKMMVAARLLALALAVSTAEA). The interval 26-79 (RNIKTTTTEKKDDAVVQPQTFPPFDRLGGGASPAFGGLPGGSIPGSSIPGFSMP) is disordered. The segment covering 52-68 (LGGGASPAFGGLPGGSI) has biased composition (gly residues). Repeat copies occupy residues 64–67 (PGGS), 64–75 (PGGSIPGSSIPG), 69–72 (PGSS), 69–80 (PGSSIPGFSMPG), 74–77 (PGFS), 79–82 (PGSG), 81–92 (SGSSLPGFSLPG), 86–89 (PGFS), 91–94 (PGSG), 104–107 (PGFS), and 113–116 (PGSP). A 3 X approximate tandem repeats region spans residues 64–92 (PGGSIPGSSIPGFSMPGSGSSLPGFSLPG). The segment at 64 to 116 (PGGSIPGSSIPGFSMPGSGSSLPGFSLPGSGTMPLFGGGSPGFSGFGGMPGSP) is 8 X 4 AA approximate repeats. The segment covering 69–79 (PGSSIPGFSMP) has biased composition (low complexity). Over residues 99–113 (FGGGSPGFSGFGGMP) the composition is skewed to gly residues. The tract at residues 99–128 (FGGGSPGFSGFGGMPGSPTAGSVPEHANKP) is disordered.

In terms of tissue distribution, enhanced expression in male flowers. Accumulates in the glumes and in anther walls, paleas and lemmas of mature florets.

The sequence is that of MFS18 protein (MFS18) from Zea mays (Maize).